The sequence spans 116 residues: Large ribosomal subunit protein eL22A (116 aa).

The protein belongs to the eukaryotic ribosomal protein eL22 family.

This is Large ribosomal subunit protein eL22A (rpl22) from Dictyostelium discoideum (Social amoeba).